The chain runs to 377 residues: Succinyl-diaminopimelate desuccinylase (377 aa).

Residue H67 coordinates Zn(2+). The active site involves D69. D100 lines the Zn(2+) pocket. E134 acts as the Proton acceptor in catalysis. Zn(2+)-binding residues include E135, E163, and H349.

Belongs to the peptidase M20A family. DapE subfamily. In terms of assembly, homodimer. Zn(2+) serves as cofactor. The cofactor is Co(2+).

The catalysed reaction is N-succinyl-(2S,6S)-2,6-diaminopimelate + H2O = (2S,6S)-2,6-diaminopimelate + succinate. The protein operates within amino-acid biosynthesis; L-lysine biosynthesis via DAP pathway; LL-2,6-diaminopimelate from (S)-tetrahydrodipicolinate (succinylase route): step 3/3. Catalyzes the hydrolysis of N-succinyl-L,L-diaminopimelic acid (SDAP), forming succinate and LL-2,6-diaminopimelate (DAP), an intermediate involved in the bacterial biosynthesis of lysine and meso-diaminopimelic acid, an essential component of bacterial cell walls. The sequence is that of Succinyl-diaminopimelate desuccinylase from Glaesserella parasuis serovar 5 (strain SH0165) (Haemophilus parasuis).